A 252-amino-acid chain; its full sequence is Imidazole glycerol phosphate synthase subunit HisF (252 aa).

Catalysis depends on residues Asp-13 and Asp-132.

It belongs to the HisA/HisF family. As to quaternary structure, heterodimer of HisH and HisF.

The protein localises to the cytoplasm. It carries out the reaction 5-[(5-phospho-1-deoxy-D-ribulos-1-ylimino)methylamino]-1-(5-phospho-beta-D-ribosyl)imidazole-4-carboxamide + L-glutamine = D-erythro-1-(imidazol-4-yl)glycerol 3-phosphate + 5-amino-1-(5-phospho-beta-D-ribosyl)imidazole-4-carboxamide + L-glutamate + H(+). Its pathway is amino-acid biosynthesis; L-histidine biosynthesis; L-histidine from 5-phospho-alpha-D-ribose 1-diphosphate: step 5/9. Its function is as follows. IGPS catalyzes the conversion of PRFAR and glutamine to IGP, AICAR and glutamate. The HisF subunit catalyzes the cyclization activity that produces IGP and AICAR from PRFAR using the ammonia provided by the HisH subunit. The protein is Imidazole glycerol phosphate synthase subunit HisF of Campylobacter curvus (strain 525.92).